The sequence spans 370 residues: Probable protein phosphatase 2C 67 (370 aa).

Positions 35 to 344 (TFGEFSMAMI…DDITVIVVYL (310 aa)) constitute a PPM-type phosphatase domain. Mn(2+)-binding residues include aspartate 77, glycine 78, aspartate 276, and aspartate 335.

The protein belongs to the PP2C family. Interacts with SAUR19. Interacts with AHA2 at the plasma membrane. Mg(2+) serves as cofactor. Mn(2+) is required as a cofactor.

It is found in the cell membrane. The enzyme catalyses O-phospho-L-seryl-[protein] + H2O = L-seryl-[protein] + phosphate. It carries out the reaction O-phospho-L-threonyl-[protein] + H2O = L-threonyl-[protein] + phosphate. Dephosphorylates and represses plasma membrane H(+)-ATPases (PM H(+)-ATPases, e.g. AHA1 and AHA2), thus influencing negatively plant growth and fitness. Promotes the apical hook maintenance of etiolated seedlings. The protein is Probable protein phosphatase 2C 67 of Arabidopsis thaliana (Mouse-ear cress).